Here is a 710-residue protein sequence, read N- to C-terminus: DNA ligase (710 aa).

Residues D53 to D57, S102 to L103, and E136 contribute to the NAD(+) site. The active-site N6-AMP-lysine intermediate is K138. NAD(+) is bound by residues R159, E196, K312, and K336. Zn(2+)-binding residues include C429, C432, C453, and C459. A BRCT domain is found at E633–G710.

Belongs to the NAD-dependent DNA ligase family. LigA subfamily. The cofactor is Mg(2+). Mn(2+) is required as a cofactor.

The catalysed reaction is NAD(+) + (deoxyribonucleotide)n-3'-hydroxyl + 5'-phospho-(deoxyribonucleotide)m = (deoxyribonucleotide)n+m + AMP + beta-nicotinamide D-nucleotide.. Functionally, DNA ligase that catalyzes the formation of phosphodiester linkages between 5'-phosphoryl and 3'-hydroxyl groups in double-stranded DNA using NAD as a coenzyme and as the energy source for the reaction. It is essential for DNA replication and repair of damaged DNA. This chain is DNA ligase, found in Parvibaculum lavamentivorans (strain DS-1 / DSM 13023 / NCIMB 13966).